Consider the following 590-residue polypeptide: Probable metalloendopeptidase G1-type (590 aa).

Residue H41 coordinates Zn(2+). E44 is an active-site residue. Residue H45 participates in Zn(2+) binding.

Belongs to the peptidase M44 family. Zn(2+) is required as a cofactor.

Functionally, seems to be involved in viral proteins maturation by cleavage at Ala-Gly-|-Xaa motifs. The sequence is that of Probable metalloendopeptidase G1-type from Homo sapiens (Human).